Here is a 532-residue protein sequence, read N- to C-terminus: Fatty-acid amide hydrolase 2-A (532 aa).

A helical membrane pass occupies residues 9 to 29 (FLGRLLRAVVWILFAAFKLFA). Catalysis depends on charge relay system residues K129 and S204. S228 functions as the Acyl-ester intermediate in the catalytic mechanism.

It belongs to the amidase family.

It is found in the membrane. The enzyme catalyses N-(5Z,8Z,11Z,14Z-eicosatetraenoyl)-ethanolamine + H2O = ethanolamine + (5Z,8Z,11Z,14Z)-eicosatetraenoate. It catalyses the reaction (9Z)-octadecenamide + H2O = (9Z)-octadecenoate + NH4(+). This is Fatty-acid amide hydrolase 2-A (faah2a) from Danio rerio (Zebrafish).